Here is a 991-residue protein sequence, read N- to C-terminus: MTSKESKPSRTTWRGMEPPLRETWNQVLQELVKRQQQEEEEQQGLVSGKKKSWVSIDLLGTEGKDIKKVNIWEPCEKWFAQVVWGVLWVLQIVLWGCLMWEMRKGNQCQAEEVIALVSDPGGFQRVQHVETVPVTCVTKNFTQWGCQPEGAYPDPELEYRNISREILEEVYKQDWPWNTYHWPLWQMENMRQWMKENEKEYKERTNKTKEDIDDLVAGRIRGRFCVPYPYALLRCEEWCWYPESINQETGHAEKIKINCTKAKAVSCTEKMPLAAVQRVYWEKEDEESMKFLNIKACNISLRCQDEEKSPGGCVQGYPIPKGAEIIPEAMKYLRGKKSRYGGIKDKNGELKLPLSVRVWVRMANLSGWVNGTPPYWNARINGSTGINGTRWYGVGTLHHLGYNISSNPERGICDFTGELWIGGDKFPYYYKPSWNCSQNWTGHPVWQVFRYLDMTEHMTSRCIQRPERHNITVGNGTITGNCSVTNWDGCNCTRSGNHLYNSTSGGLLVIICRQNSTITGIMGTNTNWTTMWNIYQNCSKCNNSSLDRTGKGTLGTVNDLKCSLPHRNESNKWTCAARTGRKGSQRDSLYIAGRDFWGRVKAKYSCESNLGGLDSMMHQQMLLQRYQVIRVRAYTYGVVEMPQSYMEAQGKNRRSRRNLQRKKRGIGLVIVLAIMAIIAAAGAGLGVANAVQQSYTRTAVQSLANATAAQQEVLEASYAMVQHIAKGIRILEARVARVEALVDRMMVYHELDCWHYQHYCVTSTRSEVANYVNWTRFKDNCTWQQWEEEIEQHEGNLSLLLREAALQVHIAQRDARRIPDAWKAIQEAFNWSSWFSWLKYVPWIIMGIVGLICFRILMCVISMCLQAYKQVKQIRYTQVTVVIEAPVELEEKQKRNGDGTNGCASLEHERRTSHRSFIQIWRATWWAWKTSPWRHNWRTMPYITLLPILVIWQWMEENGWNGENQHKKKKERVDCQDREQMPTLENDYVEL.

Positions 1–106 (MTSKESKPSR…CLMWEMRKGN (106 aa)) are cleaved as a signal peptide. At 107 to 840 (QCQAEEVIAL…WSSWFSWLKY (734 aa)) the chain is on the extracellular side. N-linked (GlcNAc...) asparagine; by host glycans are attached at residues Asn140, Asn161, Asn206, Asn258, Asn298, Asn364, Asn381, Asn387, Asn403, Asn435, Asn439, Asn470, Asn475, Asn481, Asn491, Asn501, Asn515, Asn527, Asn537, Asn542, Asn543, and Asn568. Residues 665–685 (GIGLVIVLAIMAIIAAAGAGL) form a fusion peptide region. Positions 697-747 (RTAVQSLANATAAQQEVLEASYAMVQHIAKGIRILEARVARVEALVDRMMV) form a coiled coil. An N-linked (GlcNAc...) asparagine; by host glycan is attached at Asn705. The interval 731–747 (LEARVARVEALVDRMMV) is immunosuppression. Asn773, Asn780, Asn796, and Asn830 each carry an N-linked (GlcNAc...) asparagine; by host glycan. The stretch at 788-823 (EEIEQHEGNLSLLLREAALQVHIAQRDARRIPDAWK) forms a coiled coil. Residues 841 to 861 (VPWIIMGIVGLICFRILMCVI) traverse the membrane as a helical segment. Over 862-991 (SMCLQAYKQV…PTLENDYVEL (130 aa)) the chain is Cytoplasmic. Cys864 is lipidated: S-palmitoyl cysteine; by host.

As to quaternary structure, the mature envelope protein (Env) consists of a trimer of SU-TM heterodimers attached by noncovalent interactions or by a labile interchain disulfide bond. In terms of processing, specific enzymatic cleavages in vivo yield mature proteins. Envelope glycoproteins are synthesized as an inactive precursor that is N-glycosylated and processed likely by host cell furin or by a furin-like protease in the Golgi to yield the mature SU and TM proteins. The cleavage site between SU and TM requires the minimal sequence [KR]-X-[KR]-R. The transmembrane protein is palmitoylated.

The protein localises to the virion membrane. It localises to the host cell membrane. The surface protein (SU) attaches the virus to the host cell by binding to its receptor. This interaction triggers the refolding of the transmembrane protein (TM) and is thought to activate its fusogenic potential by unmasking its fusion peptide. Fusion occurs at the host cell plasma membrane. In terms of biological role, the transmembrane protein (TM) acts as a class I viral fusion protein. Under the current model, the protein has at least 3 conformational states: pre-fusion native state, pre-hairpin intermediate state, and post-fusion hairpin state. During viral and target cell membrane fusion, the coiled coil regions (heptad repeats) assume a trimer-of-hairpins structure, positioning the fusion peptide in close proximity to the C-terminal region of the ectodomain. The formation of this structure appears to drive apposition and subsequent fusion of viral and target cell membranes. Membranes fusion leads to delivery of the nucleocapsid into the cytoplasm. The chain is Envelope glycoprotein gp160 (env) from Ovis aries (Sheep).